Reading from the N-terminus, the 45-residue chain is Large ribosomal subunit protein bL34 (45 aa).

This sequence belongs to the bacterial ribosomal protein bL34 family.

The protein is Large ribosomal subunit protein bL34 of Corynebacterium urealyticum (strain ATCC 43042 / DSM 7109).